Reading from the N-terminus, the 380-residue chain is Cystathionine gamma-synthase (380 aa).

Lysine 195 is subject to N6-(pyridoxal phosphate)lysine.

It belongs to the trans-sulfuration enzymes family. In terms of assembly, homotetramer. Pyridoxal 5'-phosphate serves as cofactor.

Its subcellular location is the cytoplasm. The enzyme catalyses O-succinyl-L-homoserine + L-cysteine = L,L-cystathionine + succinate + H(+). Its function is as follows. Catalyzes the formation of L-cystathionine from O-succinyl-L-homoserine (OSHS) and L-cysteine, via a gamma-replacement reaction. In the absence of thiol, catalyzes gamma-elimination to form 2-oxobutanoate, succinate and ammonia. This Helicobacter pylori (strain ATCC 700392 / 26695) (Campylobacter pylori) protein is Cystathionine gamma-synthase (metB).